The sequence spans 339 residues: Dihydroorotate dehydrogenase (quinone) (339 aa).

FMN-binding positions include Ala-62 to Lys-66 and Thr-86. Position 66 (Lys-66) interacts with substrate. Asn-111–Phe-115 provides a ligand contact to substrate. FMN contacts are provided by Asn-139 and Asn-172. Asn-172 lines the substrate pocket. Residue Ser-175 is the Nucleophile of the active site. A substrate-binding site is contributed by Asn-177. Positions 217 and 245 each coordinate FMN. Position 246 to 247 (Asn-246 to Thr-247) interacts with substrate. Residues Gly-268, Gly-297, and Tyr-318–Ser-319 contribute to the FMN site.

Belongs to the dihydroorotate dehydrogenase family. Type 2 subfamily. In terms of assembly, monomer. FMN serves as cofactor.

The protein localises to the cell membrane. It carries out the reaction (S)-dihydroorotate + a quinone = orotate + a quinol. It functions in the pathway pyrimidine metabolism; UMP biosynthesis via de novo pathway; orotate from (S)-dihydroorotate (quinone route): step 1/1. Catalyzes the conversion of dihydroorotate to orotate with quinone as electron acceptor. In Shewanella amazonensis (strain ATCC BAA-1098 / SB2B), this protein is Dihydroorotate dehydrogenase (quinone).